An 853-amino-acid chain; its full sequence is Ion channel CASTOR (853 aa).

Residues 1-30 show a composition bias toward low complexity; it reads MSLDSEVSVSSSSGRDWFFPSPSFFRSSPS. Residues 1–55 are disordered; that stretch reads MSLDSEVSVSSSSGRDWFFPSPSFFRSSPSQYGRRFHTNSNTHSAPSSTYPSGIR. Polar residues predominate over residues 38–51; the sequence is TNSNTHSAPSSTYP. A helical membrane pass occupies residues 96-116; it reads QFGLQFALVTLTIVFLLLLLL. A coiled-coil region spans residues 117 to 137; that stretch reads RNTHLESQVNKLQGEILRLHA. Helical transmembrane passes span 168 to 188, 227 to 247, and 279 to 299; these read NLALFLSFMLLLIPLIIFKYI, LVLLVATLLLIFLGGLTLFGV, and LVAVSISFGGMLIFAMMLGLV. RCK N-terminal domains are found at residues 320–461 and 580–752; these read QNHT…ETVV and PERI…DYVL.

This sequence belongs to the castor/pollux (TC 1.A.1.23) family. In terms of assembly, homooligomer. Expressed in infected and uninfected roots, leaves, seed pods, and flower buds.

The protein resides in the nucleus membrane. In terms of biological role, ion channel with a moderate preference for potassium over sodium and calcium. Involved in perinuclear calcium spiking but not in cytosolic calcium influx. Closed at negative voltages in presence of magnesium. Required for early signal transduction events leading to endosymbiosis. Acts early in a signal transduction chain leading from the perception of Nod factor to the activation of calcium spiking. Also involved in fungal entry into root epidermal cells during the establishment of the arbuscular mycorrhizal symbiosis. The chain is Ion channel CASTOR (CASTOR) from Lotus japonicus (Lotus corniculatus var. japonicus).